Consider the following 149-residue polypeptide: Urease accessory protein UreE (149 aa).

The protein belongs to the UreE family.

It localises to the cytoplasm. Its function is as follows. Involved in urease metallocenter assembly. Binds nickel. Probably functions as a nickel donor during metallocenter assembly. This is Urease accessory protein UreE from Ureaplasma urealyticum serovar 10 (strain ATCC 33699 / Western).